Here is a 964-residue protein sequence, read N- to C-terminus: DNA primase (964 aa).

The segment at 807-844 (SAPSLPTLVGRGGGGEGGASSDYEEERAVGSDEEEDDD) is disordered.

Belongs to the herpesviridae DNA primase family. In terms of assembly, associates with the helicase and the primase-associated factor to form the helicase-primase factor.

The protein resides in the host nucleus. Its function is as follows. Essential component of the helicase/primase complex. Unwinds the DNA at the replication forks and generates single-stranded DNA for both leading and lagging strand synthesis. The primase initiates primer synthesis and thereby produces large amount of short RNA primers on the lagging strand that the polymerase elongates using dNTPs. This Mus musculus (Mouse) protein is DNA primase (UL70).